A 77-amino-acid polypeptide reads, in one-letter code: U8-lycotoxin-Ls1t (77 aa).

A signal peptide spans 1–20 (MKLIIFTGLVLFAIVSLIEA). Positions 21 to 26 (QAENEK) are excised as a propeptide.

This sequence belongs to the neurotoxin 19 (CSTX) family. 08 (U8-Lctx) subfamily. In terms of processing, contains 4 disulfide bonds. In terms of tissue distribution, expressed by the venom gland.

Its subcellular location is the secreted. The protein is U8-lycotoxin-Ls1t of Lycosa singoriensis (Wolf spider).